The sequence spans 704 residues: Elongation factor G 2 (704 aa).

Residues 8-290 (ERYRNIGISA…AIIDYLPSPV (283 aa)) form the tr-type G domain. GTP-binding positions include 17-24 (AHIDAGKT), 88-92 (DTPGH), and 142-145 (NKMD).

The protein belongs to the TRAFAC class translation factor GTPase superfamily. Classic translation factor GTPase family. EF-G/EF-2 subfamily.

The protein resides in the cytoplasm. In terms of biological role, catalyzes the GTP-dependent ribosomal translocation step during translation elongation. During this step, the ribosome changes from the pre-translocational (PRE) to the post-translocational (POST) state as the newly formed A-site-bound peptidyl-tRNA and P-site-bound deacylated tRNA move to the P and E sites, respectively. Catalyzes the coordinated movement of the two tRNA molecules, the mRNA and conformational changes in the ribosome. This chain is Elongation factor G 2, found in Polaromonas sp. (strain JS666 / ATCC BAA-500).